The primary structure comprises 694 residues: MHKDTKLLDEIKNIKSKLKSGKPAVAPKPTPKQIKAWEETHKSHLNLDTKNSSISVPPPMPDHVLLQTSKTLSVSTLPNIKFNTINQAKFLKAIEDYDLDKIKELISSNTIKIDSFGKRGKLGKTPLQYAIINDKPELAKLLIDAGANINVKTQNGRNLFELAMYNSASDQTFELLLKTNININSMDLRALSRLHNKLFSILLKPANDINTTIGKFNRTLLHQAAERNNIKKAQISINHNINVEAQDITGETALHMLKTSKMAKILLKAGSNTEAQNKLGRTPLHNAILQANKRQVNIKNIHNIVLKLIKSGANPNAVDYYGFTPLEYAIRINDSKIFKLLIKNNAKFKKNRYELFCQALESGNLTATKYLFKKEFLNNINDKNGQNYLYYIATGGNKEVLEYLVKKNHDNGKKILTQFVDKQRNTPIHIAAQNGQFEIIKNFQKLGFDINARNADGETVLHILARAQNGEMIKELIKLGADINIKNKIGKTALDKVEEDFKGISKKISNKQLQELFEESNIIARTGRIEDETKYLYQYRQDGYYKNIEREGNRGRSATLLVPEVNISLFFTGIGLLYNANDSTIRHFMPHDFWTDNARRTEDFFNMRLDNKKFVQTHSKEKFLKTYKNFLKDNPQKDYNEIIANLYPKGLIGIALQNDDLEHKLYALEAKYYVSEKYNMDLPMTIVKNKKLIP.

10 ANK repeats span residues 122–151 (LGKTPLQYAIINDKPELAKLLIDAGANINV), 155–185 (NGRNLFELAMYNSASDQTFELLLKTNININS), 216–245 (FNRTLLHQAAERNNIKKAQISINHNINVEA), 249–275 (TGETALHMLKTSKMAKILLKAGSNTEA), 279–317 (LGRTPLHNAILQANKRQVNIKNIHNIVLKLIKSGANPNA), 321–350 (YGFTPLEYAIRINDSKIFKLLIKNNAKFKK), 351–382 (NRYELFCQALESGNLTATKYLFKKEFLNNIND), 384–413 (NGQNYLYYIATGGNKEVLEYLVKKNHDNGK), 423–452 (QRNTPIHIAAQNGQFEIIKNFQKLGFDINA), and 456–485 (DGETVLHILARAQNGEMIKELIKLGADINI).

This is Putative ankyrin repeat protein RBE_0921 from Rickettsia bellii (strain RML369-C).